A 150-amino-acid polypeptide reads, in one-letter code: Large ribosomal subunit protein uL13 (150 aa).

The tract at residues Thr129 to Gln150 is disordered. Residues Gln139–Gln150 are compositionally biased toward polar residues.

The protein belongs to the universal ribosomal protein uL13 family. Part of the 50S ribosomal subunit.

This protein is one of the early assembly proteins of the 50S ribosomal subunit, although it is not seen to bind rRNA by itself. It is important during the early stages of 50S assembly. The protein is Large ribosomal subunit protein uL13 of Synechococcus sp. (strain CC9605).